Reading from the N-terminus, the 134-residue chain is ATP synthase epsilon chain, chloroplastic (134 aa).

It belongs to the ATPase epsilon chain family. As to quaternary structure, F-type ATPases have 2 components, CF(1) - the catalytic core - and CF(0) - the membrane proton channel. CF(1) has five subunits: alpha(3), beta(3), gamma(1), delta(1), epsilon(1). CF(0) has three main subunits: a, b and c.

The protein localises to the plastid. The protein resides in the chloroplast thylakoid membrane. Produces ATP from ADP in the presence of a proton gradient across the membrane. The protein is ATP synthase epsilon chain, chloroplastic of Porphyra purpurea (Red seaweed).